We begin with the raw amino-acid sequence, 342 residues long: MYALIRQLLFRLEPEQAHRVSMQLARLGLRIAAVPGVRSLPAVPRRVMGIDFPNPVGLAAGFDKDGEYMDVLEQLGFGFLELGTVTPRAQPGNPQPRVFRIPEHEALINRMGFNNQGAEPLVRRLEVSRHRGVVGINIGKNRDTPPERAVEDYAQALGMVYGVADYVAVNLSSPNTPGLRDLQHEGALRNLIDRLQTERKRLAELHDKRVPLVVKIAPDWEAGELDATLDILLERRVDGIVATNTTLGRTGVEQTPQARESGGLSGAPLREQAEWVLEQVAARRDRRTALIAAGGIMSGEDVTRRLDLGADLVQLYTGMIYRGPGLVQEAVRAAARHAGQPA.

FMN-binding positions include 60-64 and T84; that span reads AGFDK. K64 contributes to the substrate binding site. Substrate is bound at residue 109 to 113; that stretch reads NRMGF. FMN is bound by residues N137 and N170. N170 is a binding site for substrate. S173 serves as the catalytic Nucleophile. N175 provides a ligand contact to substrate. K215 and T243 together coordinate FMN. Position 244–245 (244–245) interacts with substrate; it reads NT. Residues G266, G295, and 316-317 contribute to the FMN site; that span reads YT.

The protein belongs to the dihydroorotate dehydrogenase family. Type 2 subfamily. Monomer. It depends on FMN as a cofactor.

The protein resides in the cell membrane. It carries out the reaction (S)-dihydroorotate + a quinone = orotate + a quinol. The protein operates within pyrimidine metabolism; UMP biosynthesis via de novo pathway; orotate from (S)-dihydroorotate (quinone route): step 1/1. In terms of biological role, catalyzes the conversion of dihydroorotate to orotate with quinone as electron acceptor. This Halorhodospira halophila (strain DSM 244 / SL1) (Ectothiorhodospira halophila (strain DSM 244 / SL1)) protein is Dihydroorotate dehydrogenase (quinone).